A 205-amino-acid polypeptide reads, in one-letter code: Potassium-transporting ATPase KdpC subunit (205 aa).

Residues 7 to 27 (PAIVILVALTIITGLIYPLAM) traverse the membrane as a helical segment.

This sequence belongs to the KdpC family. In terms of assembly, the system is composed of three essential subunits: KdpA, KdpB and KdpC.

The protein localises to the cell inner membrane. Functionally, part of the high-affinity ATP-driven potassium transport (or Kdp) system, which catalyzes the hydrolysis of ATP coupled with the electrogenic transport of potassium into the cytoplasm. This subunit acts as a catalytic chaperone that increases the ATP-binding affinity of the ATP-hydrolyzing subunit KdpB by the formation of a transient KdpB/KdpC/ATP ternary complex. In Nitrobacter hamburgensis (strain DSM 10229 / NCIMB 13809 / X14), this protein is Potassium-transporting ATPase KdpC subunit.